Reading from the N-terminus, the 204-residue chain is Urease accessory protein UreG (204 aa).

11–18 contributes to the GTP binding site; that stretch reads GPVGAGKT.

The protein belongs to the SIMIBI class G3E GTPase family. UreG subfamily. In terms of assembly, homodimer. UreD, UreF and UreG form a complex that acts as a GTP-hydrolysis-dependent molecular chaperone, activating the urease apoprotein by helping to assemble the nickel containing metallocenter of UreC. The UreE protein probably delivers the nickel.

The protein localises to the cytoplasm. Its function is as follows. Facilitates the functional incorporation of the urease nickel metallocenter. This process requires GTP hydrolysis, probably effectuated by UreG. This chain is Urease accessory protein UreG, found in Staphylococcus saprophyticus subsp. saprophyticus (strain ATCC 15305 / DSM 20229 / NCIMB 8711 / NCTC 7292 / S-41).